A 1488-amino-acid chain; its full sequence is Chromosome partition protein MukB (1488 aa).

34-41 is a binding site for ATP; sequence GGNGAGKS. Coiled coils occupy residues 326–418, 444–472, and 509–602; these read LEAD…QYNQ, LDTF…QTAH, and RHLA…QRAP. The flexible hinge stretch occupies residues 666 to 783; that stretch reads PGGAEDQRLN…SLPIFGRAAR (118 aa). 3 coiled-coil regions span residues 835-923, 977-1116, and 1209-1265; these read EAEI…AKLE, EMLS…AKAG, and VEAI…LQSV. Positions 1049–1074 are disordered; the sequence is ADSGAEERARQRRDELHAQLSNNRSR. Basic and acidic residues predominate over residues 1051–1065; that stretch reads SGAEERARQRRDELH.

This sequence belongs to the SMC family. MukB subfamily. In terms of assembly, homodimerization via its hinge domain. Binds to DNA via its C-terminal region. Interacts, and probably forms a ternary complex, with MukE and MukF via its C-terminal region. The complex formation is stimulated by calcium or magnesium. Interacts with tubulin-related protein FtsZ.

The protein resides in the cytoplasm. It is found in the nucleoid. Its function is as follows. Plays a central role in chromosome condensation, segregation and cell cycle progression. Functions as a homodimer, which is essential for chromosome partition. Involved in negative DNA supercoiling in vivo, and by this means organize and compact chromosomes. May achieve or facilitate chromosome segregation by condensation DNA from both sides of a centrally located replisome during cell division. In Salmonella arizonae (strain ATCC BAA-731 / CDC346-86 / RSK2980), this protein is Chromosome partition protein MukB.